Reading from the N-terminus, the 971-residue chain is Kinesin-like protein KIN-6 (971 aa).

Disordered regions lie at residues 1–44 and 93–121; these read MEEK…SSLA and TTTT…RNPE. Over residues 29 to 39 the composition is skewed to low complexity; sequence ATPFTTTTKPP. The region spanning 76–460 is the Kinesin motor domain; sequence SLKIFLRIKP…LRQASPYMKI (385 aa). 202–209 provides a ligand contact to ATP; it reads GPSGSGKT. Over residues 700 to 709 the composition is skewed to basic and acidic residues; it reads RREAGSEESS. Disordered stretches follow at residues 700–856 and 872–917; these read RREA…TEEM and KTTN…RLQP. Over residues 768–783 the composition is skewed to polar residues; the sequence is QSVNSEENVGIPSTIT. Residues 785-797 are compositionally biased toward basic and acidic residues; the sequence is VEAEVTDFQRDQN. Positions 809–827 are enriched in polar residues; it reads EVSQDCINSGLSNVQTKSA. Positions 831–842 are enriched in basic and acidic residues; it reads RFPDSEKQERNR. A compositionally biased stretch (basic residues) spans 903-915; it reads KKQKNGQKPKRRL.

The protein belongs to the TRAFAC class myosin-kinesin ATPase superfamily. Kinesin family. KIN-6 subfamily.

This Arabidopsis thaliana (Mouse-ear cress) protein is Kinesin-like protein KIN-6.